A 316-amino-acid polypeptide reads, in one-letter code: ATP synthase gamma chain (316 aa).

Belongs to the ATPase gamma chain family. As to quaternary structure, F-type ATPases have 2 components, CF(1) - the catalytic core - and CF(0) - the membrane proton channel. CF(1) has five subunits: alpha(3), beta(3), gamma(1), delta(1), epsilon(1). CF(0) has three main subunits: a, b and c.

The protein localises to the cellular thylakoid membrane. Produces ATP from ADP in the presence of a proton gradient across the membrane. The gamma chain is believed to be important in regulating ATPase activity and the flow of protons through the CF(0) complex. The sequence is that of ATP synthase gamma chain from Prochlorococcus marinus subsp. pastoris (strain CCMP1986 / NIES-2087 / MED4).